Here is a 216-residue protein sequence, read N- to C-terminus: Ras-related protein Rab11C (216 aa).

19–26 (GDSGVGKS) is a binding site for GTP. The short motif at 41 to 49 (SKSTIGVEF) is the Effector region element. GTP-binding positions include 67–71 (DTAGQ) and 125–128 (NKSD). 2 S-geranylgeranyl cysteine lipidation sites follow: C213 and C214.

This sequence belongs to the small GTPase superfamily. Rab family.

Its subcellular location is the cell membrane. In Lotus japonicus (Lotus corniculatus var. japonicus), this protein is Ras-related protein Rab11C (RAB11C).